The chain runs to 192 residues: dTTP/UTP pyrophosphatase (192 aa).

Asp65 (proton acceptor) is an active-site residue.

This sequence belongs to the Maf family. YhdE subfamily. The cofactor is a divalent metal cation.

The protein resides in the cytoplasm. It carries out the reaction dTTP + H2O = dTMP + diphosphate + H(+). The catalysed reaction is UTP + H2O = UMP + diphosphate + H(+). Functionally, nucleoside triphosphate pyrophosphatase that hydrolyzes dTTP and UTP. May have a dual role in cell division arrest and in preventing the incorporation of modified nucleotides into cellular nucleic acids. In Fusobacterium nucleatum subsp. nucleatum (strain ATCC 25586 / DSM 15643 / BCRC 10681 / CIP 101130 / JCM 8532 / KCTC 2640 / LMG 13131 / VPI 4355), this protein is dTTP/UTP pyrophosphatase.